We begin with the raw amino-acid sequence, 199 residues long: Interferon kappa (199 aa).

Positions 1–21 (MTPKFLWLVALVALYIPPIQS) are cleaved as a signal peptide. 2 cysteine pairs are disulfide-bonded: C24/C119 and C49/C162.

Belongs to the alpha/beta interferon family. Expressed at low levels in peritoneal macrophages.

The protein resides in the secreted. Its function is as follows. May play a role in the regulation of immune cell function. The sequence is that of Interferon kappa (Ifnk) from Mus musculus (Mouse).